A 356-amino-acid chain; its full sequence is MAKVMTVRGPIDHPETLGFTLTHEHLSLDFHHFYVAPPPGLDVYVNKKITLQNVGYIRQYPYSSAYNVNFEDDETHDAVLKDVMQYKACGGGAIVENTSHGINRNLKLLYNISEACSVHIVAGTGHYVQAVQPDSVTHMTIEEMGDLYTKEILFGTQVDTAANETTMIKCGMIGEVGSSWPITSFEKKAIQATAETQCVLNCPVTFHPGRDKDAPAEIVRLYLEAGGKADKCVMSHLDRTILDHGDLLEFAKLGTYCQFDLFGTECSYYQLNNTGYMPSDEQRIQSIEMMLQEGYEDRVLMSHDIHTKHRLTHFGGHGYSHILNNILMRLSLRGIDIKTVDNITIKNPAKWLEMKV.

H23, H25, E175, H207, H236, and D304 together coordinate a divalent metal cation.

It belongs to the metallo-dependent hydrolases superfamily. Phosphotriesterase family. A divalent metal cation is required as a cofactor.

This Aedes aegypti (Yellowfever mosquito) protein is Phosphotriesterase-related protein.